Here is a 47-residue protein sequence, read N- to C-terminus: KEGYMGSDGCKMSCVINDQFCDTECQAKLKGSTGYCYFXGLACYXXG.

The region spanning 1–47 (KEGYMGSDGCKMSCVINDQFCDTECQAKLKGSTGYCYFXGLACYXXG) is the LCN-type CS-alpha/beta domain. Cystine bridges form between C14–C36 and C21–C43.

Expressed by the venom gland.

It is found in the secreted. Functionally, causes transient paralysis of the rear legs of and spasms in insects (A.domestica). The protein is Putative beta-neurotoxin of Rhopalurus junceus (Caribbean blue scorpion).